Consider the following 251-residue polypeptide: Triosephosphate isomerase (251 aa).

9 to 11 (NWK) is a substrate binding site. Catalysis depends on histidine 95, which acts as the Electrophile. Residue glutamate 167 is the Proton acceptor of the active site. Substrate-binding positions include glycine 173, serine 212, and 233 to 234 (GG).

It belongs to the triosephosphate isomerase family. In terms of assembly, homodimer.

It is found in the cytoplasm. The catalysed reaction is D-glyceraldehyde 3-phosphate = dihydroxyacetone phosphate. Its pathway is carbohydrate biosynthesis; gluconeogenesis. It participates in carbohydrate degradation; glycolysis; D-glyceraldehyde 3-phosphate from glycerone phosphate: step 1/1. Involved in the gluconeogenesis. Catalyzes stereospecifically the conversion of dihydroxyacetone phosphate (DHAP) to D-glyceraldehyde-3-phosphate (G3P). The protein is Triosephosphate isomerase of Pseudomonas putida (strain GB-1).